A 502-amino-acid polypeptide reads, in one-letter code: L-amino-acid oxidase BmooLAAO-I (502 aa).

A signal peptide spans 1 to 18; the sequence is MNVFFTFSLLFLAALGSC. Cys28 and Cys191 are disulfide-bonded. FAD is bound by residues 61–62, 81–82, Arg89, and 105–108; these read MS, EA, and GPMR. Substrate is bound at residue Arg108. Asn190 carries N-linked (GlcNAc...) asparagine glycosylation. Residue His241 coordinates substrate. Val279 is a binding site for FAD. The cysteines at positions 349 and 430 are disulfide-linked. Tyr390 is a substrate binding site. FAD contacts are provided by residues Glu475 and 482–487; that span reads GWIDST. Residue 482-483 participates in substrate binding; sequence GW.

This sequence belongs to the flavin monoamine oxidase family. FIG1 subfamily. Homodimer; non-covalently linked. It depends on FAD as a cofactor. N-glycosylated. The enzymatic activity is not affected by deglycosylation. In terms of tissue distribution, expressed by the venom gland.

Its subcellular location is the secreted. The catalysed reaction is an L-alpha-amino acid + O2 + H2O = a 2-oxocarboxylate + H2O2 + NH4(+). The enzyme catalyses L-leucine + O2 + H2O = 4-methyl-2-oxopentanoate + H2O2 + NH4(+). It catalyses the reaction L-phenylalanine + O2 + H2O = 3-phenylpyruvate + H2O2 + NH4(+). It carries out the reaction L-tryptophan + O2 + H2O = indole-3-pyruvate + H2O2 + NH4(+). The catalysed reaction is L-methionine + O2 + H2O = 4-methylsulfanyl-2-oxobutanoate + H2O2 + NH4(+). The enzyme catalyses L-isoleucine + O2 + H2O = (S)-3-methyl-2-oxopentanoate + H2O2 + NH4(+). It catalyses the reaction L-histidine + O2 + H2O = 3-(imidazol-5-yl)pyruvate + H2O2 + NH4(+). It carries out the reaction L-tyrosine + O2 + H2O = 3-(4-hydroxyphenyl)pyruvate + H2O2 + NH4(+). The catalysed reaction is L-alanine + O2 + H2O = pyruvate + H2O2 + NH4(+). The enzyme catalyses L-valine + O2 + H2O = 3-methyl-2-oxobutanoate + H2O2 + NH4(+). Its enzymatic activities is reduced when it is exposed to Ca(2+), Zn(2+), Al(3+), Cu(2+) or Ni(2+) salts. Functionally, catalyzes an oxidative deamination of predominantly hydrophobic and aromatic L-amino acids, thus producing hydrogen peroxide that may contribute to the toxicity of the venom. Shows very high activity on L-Met, and L-Leu, high activity on L-Ile, L-Phe and L-Tyr and moderate activity on L-His, L-Val and L-Ala. Exhibits diverse biological activities, such as edema, apoptosis of tumor cell lines, antibacterial activities against both Gram-positive and Gram-negative bacteria, as well as induction of platelet aggregation. Effects of snake L-amino oxidases on platelets are controversial, since they either induce aggregation or inhibit agonist-induced aggregation. These different effects are probably due to different experimental conditions. Unlike other snake venom L-amino acid oxidases, does not induce hemorrhage. It may also induce hemolysis. Has parasiticidal activities against and leishmania, as a result of enzyme-catalyzed hydrogen peroxide production. This Bothrops moojeni (Lance-headed viper) protein is L-amino-acid oxidase BmooLAAO-I.